A 508-amino-acid chain; its full sequence is tRNA (guanine(37)-N(1))-methyltransferase (508 aa).

The transit peptide at 1-53 (MKFNFWKGLWKPKSLTPTLSHRLYRRMYTPQPPLNREMTVLDRSKFTVSLNLA) directs the protein to the mitochondrion. His253 lines the S-adenosyl-L-methionine pocket. Residues 267-284 (RERKQQERAKRENHEKST) are compositionally biased toward basic and acidic residues. The interval 267 to 291 (RERKQQERAKRENHEKSTETAVEPD) is disordered. Residues 323–324 (DL), 351–352 (DG), and Asn402 contribute to the S-adenosyl-L-methionine site.

Belongs to the class I-like SAM-binding methyltransferase superfamily. TRM5/TYW2 family. As to quaternary structure, monomer.

Its subcellular location is the mitochondrion matrix. The protein localises to the nucleus. It localises to the cytoplasm. It catalyses the reaction guanosine(37) in tRNA + S-adenosyl-L-methionine = N(1)-methylguanosine(37) in tRNA + S-adenosyl-L-homocysteine + H(+). Functionally, specifically methylates the N1 position of guanosine-37 in various cytoplasmic and mitochondrial tRNAs. Methylation is not dependent on the nature of the nucleoside 5' of the target nucleoside. This is the first step in the biosynthesis of wybutosine (yW), a modified base adjacent to the anticodon of tRNAs and required for accurate decoding. This is tRNA (guanine(37)-N(1))-methyltransferase from Yarrowia lipolytica (strain CLIB 122 / E 150) (Yeast).